We begin with the raw amino-acid sequence, 380 residues long: Cytochrome b (380 aa).

4 helical membrane passes run 33 to 53 (FGSL…FLAM), 77 to 98 (WIIR…FLHV), 113 to 133 (WNIG…GYVL), and 178 to 198 (FFTL…LHLL). Heme b contacts are provided by His83 and His97. 2 residues coordinate heme b: His182 and His196. Residue His201 participates in a ubiquinone binding. A run of 4 helical transmembrane segments spans residues 226–246 (TKDI…TLFS), 288–308 (LGGV…PILH), 320–340 (LSQL…WIGG), and 347–367 (FITI…ILMP).

It belongs to the cytochrome b family. The cytochrome bc1 complex contains 11 subunits: 3 respiratory subunits (MT-CYB, CYC1 and UQCRFS1), 2 core proteins (UQCRC1 and UQCRC2) and 6 low-molecular weight proteins (UQCRH/QCR6, UQCRB/QCR7, UQCRQ/QCR8, UQCR10/QCR9, UQCR11/QCR10 and a cleavage product of UQCRFS1). This cytochrome bc1 complex then forms a dimer. Heme b is required as a cofactor.

Its subcellular location is the mitochondrion inner membrane. Component of the ubiquinol-cytochrome c reductase complex (complex III or cytochrome b-c1 complex) that is part of the mitochondrial respiratory chain. The b-c1 complex mediates electron transfer from ubiquinol to cytochrome c. Contributes to the generation of a proton gradient across the mitochondrial membrane that is then used for ATP synthesis. In Pan paniscus (Pygmy chimpanzee), this protein is Cytochrome b (MT-CYB).